We begin with the raw amino-acid sequence, 223 residues long: UPF0502 protein Avin_04790 (223 aa).

It belongs to the UPF0502 family.

The protein is UPF0502 protein Avin_04790 of Azotobacter vinelandii (strain DJ / ATCC BAA-1303).